A 1164-amino-acid polypeptide reads, in one-letter code: DNA-directed RNA polymerase subunit beta (1164 aa).

2 disordered regions span residues 975–994 (RSSLPNRDGERQVDDFGKSN) and 1143–1164 (ANAALGINLSRDERPDADMDVS). 2 stretches are compositionally biased toward basic and acidic residues: residues 981-991 (RDGERQVDDFG) and 1152-1164 (SRDERPDADMDVS).

Belongs to the RNA polymerase beta chain family. As to quaternary structure, the RNAP catalytic core consists of 2 alpha, 1 beta, 1 beta' and 1 omega subunit. When a sigma factor is associated with the core the holoenzyme is formed, which can initiate transcription.

The enzyme catalyses RNA(n) + a ribonucleoside 5'-triphosphate = RNA(n+1) + diphosphate. In terms of biological role, DNA-dependent RNA polymerase catalyzes the transcription of DNA into RNA using the four ribonucleoside triphosphates as substrates. The sequence is that of DNA-directed RNA polymerase subunit beta from Corynebacterium jeikeium (strain K411).